The primary structure comprises 125 residues: uncharacterized protein (125 aa).

The next 4 helical transmembrane spans lie at 9-29 (IANA…TLTG), 33-53 (GEKT…NMVV), 56-76 (IVQV…TLVV), and 100-120 (FWTA…LNAF).

The protein localises to the cell membrane. This is an uncharacterized protein from Streptomyces coelicolor (strain ATCC BAA-471 / A3(2) / M145).